A 308-amino-acid polypeptide reads, in one-letter code: Protein translocase subunit SecF (308 aa).

A run of 6 helical transmembrane segments spans residues Val23–Tyr42, Ile140–Val160, Trp164–Phe184, Leu194–Ile214, Ile246–Ala266, and Val272–Ile292.

It belongs to the SecD/SecF family. SecF subfamily. Forms a complex with SecD. Part of the essential Sec protein translocation apparatus which comprises SecA, SecYEG and auxiliary proteins SecDF-YajC and YidC.

The protein localises to the cell inner membrane. In terms of biological role, part of the Sec protein translocase complex. Interacts with the SecYEG preprotein conducting channel. SecDF uses the proton motive force (PMF) to complete protein translocation after the ATP-dependent function of SecA. The sequence is that of Protein translocase subunit SecF from Rickettsia typhi (strain ATCC VR-144 / Wilmington).